The sequence spans 389 residues: P2X purinoceptor 4a (389 aa).

The Cytoplasmic segment spans residues 1 to 36; it reads MSESVGCCDSVSQCFFDYYTSKILIIRSKKVGTLNR. Residues 37–57 form a helical membrane-spanning segment; sequence FTQALVIAYVIGYVCVYNKGY. The Extracellular segment spans residues 58–343; the sequence is QDTDTVLSSV…NIIPTLLNMG (286 aa). ATP contacts are provided by Lys-70 and Lys-72. CTP contacts are provided by Lys-70 and Lys-72. N-linked (GlcNAc...) asparagine glycosylation is found at Asn-78 and Asn-113. Disulfide bonds link Cys-119-Cys-168, Cys-129-Cys-152, and Cys-135-Cys-162. Residue Arg-143 coordinates CTP. Asn-187 carries N-linked (GlcNAc...) asparagine glycosylation. The ATP site is built by Thr-189 and Leu-191. Thr-189 provides a ligand contact to CTP. The N-linked (GlcNAc...) asparagine glycan is linked to Asn-213. 2 cysteine pairs are disulfide-bonded: Cys-220-Cys-230 and Cys-264-Cys-273. ATP-binding residues include Asn-296, Arg-298, and Lys-316. CTP-binding residues include Asn-296, Arg-298, and Lys-316. A helical membrane pass occupies residues 344–364; it reads AGLALLGLVNVICDWIVLTFM. Residues 365–389 are Cytoplasmic-facing; that stretch reads KRKQHYKEQKYTYVDDFGLLHNEDK.

Belongs to the P2X receptor family. Functional P2XRs are organized as homomeric and heteromeric trimers. Forms homotrimer.

The protein resides in the cell membrane. It localises to the lysosome membrane. It carries out the reaction K(+)(in) = K(+)(out). The catalysed reaction is Na(+)(in) = Na(+)(out). The enzyme catalyses Ca(2+)(in) = Ca(2+)(out). Activated by ATP. pH-dependent and inhibited by acidic pH. Functionally, ATP-gated nonselective transmembrane cation channel permeable to potassium, sodium and calcium. CTP, but not GTP or UTP, functions as a weak affinity agonist for P2RX4. Activated by extracellularly released ATP, it plays multiple role in immunity and central nervous system physiology. Could also function as an ATP-gated cation channel of lysosomal membranes. The polypeptide is P2X purinoceptor 4a (p2rx4a) (Danio rerio (Zebrafish)).